The chain runs to 48 residues: Small, acid-soluble spore protein N (48 aa).

The segment at 1–48 is disordered; the sequence is MGINKKDGQPQYAPSHLGTKPVKYKRNKGEKFHDKSNGHPIVMQTKGE. Positions 27–37 are enriched in basic and acidic residues; that stretch reads NKGEKFHDKSN.

This sequence belongs to the SspN family.

The protein localises to the spore core. This chain is Small, acid-soluble spore protein N, found in Bacillus velezensis (strain DSM 23117 / BGSC 10A6 / LMG 26770 / FZB42) (Bacillus amyloliquefaciens subsp. plantarum).